Consider the following 464-residue polypeptide: Bifunctional protein GlmU (464 aa).

Residues 1–232 (MKHDELAAVI…ADEAMGINDR (232 aa)) are pyrophosphorylase. UDP-N-acetyl-alpha-D-glucosamine-binding positions include 11 to 14 (LAAG), K25, Q76, and 81 to 82 (GT). D106 provides a ligand contact to Mg(2+). The UDP-N-acetyl-alpha-D-glucosamine site is built by G143, E157, N172, and N230. Residue N230 participates in Mg(2+) binding. The tract at residues 233 to 253 (VQLAQASALMRRRINENLMRA) is linker. The N-acetyltransferase stretch occupies residues 254 to 464 (GVSFIDPEQT…RHDPKCKNKD (211 aa)). 2 residues coordinate UDP-N-acetyl-alpha-D-glucosamine: R336 and K354. H366 (proton acceptor) is an active-site residue. UDP-N-acetyl-alpha-D-glucosamine contacts are provided by Y369 and N380. Acetyl-CoA contacts are provided by residues 389–390 (NY), S408, A426, and R443.

The protein in the N-terminal section; belongs to the N-acetylglucosamine-1-phosphate uridyltransferase family. In the C-terminal section; belongs to the transferase hexapeptide repeat family. Homotrimer. Mg(2+) is required as a cofactor.

It is found in the cytoplasm. The enzyme catalyses alpha-D-glucosamine 1-phosphate + acetyl-CoA = N-acetyl-alpha-D-glucosamine 1-phosphate + CoA + H(+). It carries out the reaction N-acetyl-alpha-D-glucosamine 1-phosphate + UTP + H(+) = UDP-N-acetyl-alpha-D-glucosamine + diphosphate. It functions in the pathway nucleotide-sugar biosynthesis; UDP-N-acetyl-alpha-D-glucosamine biosynthesis; N-acetyl-alpha-D-glucosamine 1-phosphate from alpha-D-glucosamine 6-phosphate (route II): step 2/2. It participates in nucleotide-sugar biosynthesis; UDP-N-acetyl-alpha-D-glucosamine biosynthesis; UDP-N-acetyl-alpha-D-glucosamine from N-acetyl-alpha-D-glucosamine 1-phosphate: step 1/1. The protein operates within bacterial outer membrane biogenesis; LPS lipid A biosynthesis. Functionally, catalyzes the last two sequential reactions in the de novo biosynthetic pathway for UDP-N-acetylglucosamine (UDP-GlcNAc). The C-terminal domain catalyzes the transfer of acetyl group from acetyl coenzyme A to glucosamine-1-phosphate (GlcN-1-P) to produce N-acetylglucosamine-1-phosphate (GlcNAc-1-P), which is converted into UDP-GlcNAc by the transfer of uridine 5-monophosphate (from uridine 5-triphosphate), a reaction catalyzed by the N-terminal domain. This is Bifunctional protein GlmU from Syntrophotalea carbinolica (strain DSM 2380 / NBRC 103641 / GraBd1) (Pelobacter carbinolicus).